Here is a 1098-residue protein sequence, read N- to C-terminus: Tudor domain-containing protein 7 (1098 aa).

2 consecutive HTH OST-type domains span residues 3–76 (EGDL…YAMA) and 233–302 (KMDE…YPAK). S319 carries the phosphoserine modification. Residues 337–406 (MAGDFKEKVA…PQKAILYAKL (70 aa)) enclose the HTH OST-type 3 domain. Tudor domains are found at residues 513–570 (AVNV…FCSL) and 703–760 (LPFC…FLQE). The residue at position 859 (S859) is a Phosphoserine. Positions 861–1098 (NSKNGNMRVS…EYLIELSKVN (238 aa)) are interaction with CDK17. Residues 893-1098 (TSSFSTEELP…EYLIELSKVN (206 aa)) form an interaction with CABLES1 region.

The protein belongs to the TDRD7 family. As to quaternary structure, found in a mRNP complex, at least composed of TDRD1, TDRD6, TDRD7 and DDX4. Found in a complex containing CABLES1, CDK16 and CDK17. Interacts with CABLES1, CDK17 and PIWIL1.

It is found in the cytoplasm. Its function is as follows. Component of specific cytoplasmic RNA granules involved in post-transcriptional regulation of specific genes: probably acts by binding to specific mRNAs and regulating their translation. Required for lens transparency during lens development, by regulating translation of genes such as CRYBB3 and HSPB1 in the developing lens. Also required during spermatogenesis. The polypeptide is Tudor domain-containing protein 7 (TDRD7) (Pongo abelii (Sumatran orangutan)).